The primary structure comprises 84 residues: Replication regulatory protein repA2 (84 aa).

Residues 1 to 13 (MSQTENAVTSSSG) are compositionally biased toward polar residues. The disordered stretch occupies residues 1–31 (MSQTENAVTSSSGAKRAYRKGNPLSDAEKQR).

Its function is as follows. This protein is involved in the determination of copy number in gene replication. It binds to the repA promoter thus inhibiting the synthesis of the mRNA for the initiator protein RepA. The sequence is that of Replication regulatory protein repA2 (repA2) from Escherichia coli.